A 306-amino-acid chain; its full sequence is MRRKIALFLALIFVGVSLVSCSSKKEAVSGDVVAVVNGEKITNAEYQQIFEQVKEQIESAPTYTKDIWNQDYQGKKFLDFVKENVLDSLVAQKLLVQEAKKKNITVTDKEVEEEYNKEKQFNSKVTKEQIREYLLIDKLLAEYTKDVKVTDEELKKYYDEHKESFEVMRARHILVADEKTAEDIYQRLMKGEDFAALAKEYSIDTATKDNGGDLGEFPHGVMVPEFEEAAFSLKLGEISKPVKTQYGYHIIKSEGITVKPFDEVKGTIESYLLNDKKNKVIKEKYDELVKASKIQKFPENIKVKVG.

Residues 1 to 20 (MRRKIALFLALIFVGVSLVS) form the signal peptide. Residue cysteine 21 is the site of N-palmitoyl cysteine attachment. Residue cysteine 21 is the site of S-diacylglycerol cysteine attachment. One can recognise a PpiC domain in the interval 165 to 255 (FEVMRARHIL…YGYHIIKSEG (91 aa)).

This sequence belongs to the PrsA family.

It localises to the cell membrane. It carries out the reaction [protein]-peptidylproline (omega=180) = [protein]-peptidylproline (omega=0). Functionally, plays a major role in protein secretion by helping the post-translocational extracellular folding of several secreted proteins. This chain is Foldase protein PrsA, found in Caldanaerobacter subterraneus subsp. tengcongensis (strain DSM 15242 / JCM 11007 / NBRC 100824 / MB4) (Thermoanaerobacter tengcongensis).